Consider the following 360-residue polypeptide: Phospho-N-acetylmuramoyl-pentapeptide-transferase (360 aa).

Helical transmembrane passes span 27–47, 74–94, 99–119, 135–155, 165–185, 199–219, 236–256, 263–283, 288–308, and 337–357; these read GATATALFFVFFFGPRIIAAL, TMGGLMILSGLIVSTLLWANL, VWVVLFVTTGFGLIGFYDDYL, LLLEVGIAGAACYAMMLLGTP, INGFAVDLGLFFLVVGPFVIV, GLAIVPVMIAAGTFGVIAYLA, AGELSVVTGAVIGAGLGFLWF, IFMGDTGSLALGGLLGAVAVA, IVLAIVGGLFVLETLSVIVQV, and QVVVRFWIIAFVLALIGLSTL.

Belongs to the glycosyltransferase 4 family. MraY subfamily. It depends on Mg(2+) as a cofactor.

The protein localises to the cell inner membrane. The enzyme catalyses UDP-N-acetyl-alpha-D-muramoyl-L-alanyl-gamma-D-glutamyl-meso-2,6-diaminopimeloyl-D-alanyl-D-alanine + di-trans,octa-cis-undecaprenyl phosphate = di-trans,octa-cis-undecaprenyl diphospho-N-acetyl-alpha-D-muramoyl-L-alanyl-D-glutamyl-meso-2,6-diaminopimeloyl-D-alanyl-D-alanine + UMP. Its pathway is cell wall biogenesis; peptidoglycan biosynthesis. Its function is as follows. Catalyzes the initial step of the lipid cycle reactions in the biosynthesis of the cell wall peptidoglycan: transfers peptidoglycan precursor phospho-MurNAc-pentapeptide from UDP-MurNAc-pentapeptide onto the lipid carrier undecaprenyl phosphate, yielding undecaprenyl-pyrophosphoryl-MurNAc-pentapeptide, known as lipid I. This Methylocella silvestris (strain DSM 15510 / CIP 108128 / LMG 27833 / NCIMB 13906 / BL2) protein is Phospho-N-acetylmuramoyl-pentapeptide-transferase.